A 210-amino-acid chain; its full sequence is S-norcoclaurine synthase (210 aa).

A signal peptide spans 1–19; sequence MMKMEVVFVFLMLLGTINC. 108-110 is a binding site for dopamine; it reads YKE. The active-site Proton donor is lysine 122. Residue aspartate 141 participates in (4-hydroxyphenyl)acetaldehyde binding.

It belongs to the BetVI family. In terms of assembly, concentration-dependent dimerization, but mainly monomeric at concentrations around 10 uM. Expressed most abundantly in the rhizomes and to a lesser extent in petioles, roots, leaves and flower buds.

The enzyme catalyses (4-hydroxyphenyl)acetaldehyde + dopamine = (S)-norcoclaurine + H2O. Involved in the biosynthesis of the common precursor of all benzylisoquinoline alkaloids such as morphine, sanguinarine, codeine or berberine. Condenses dopamine and 4-hydroxyphenylacetaldehyde. The polypeptide is S-norcoclaurine synthase (Thalictrum flavum subsp. glaucum (Yellow meadow rue)).